Reading from the N-terminus, the 28-residue chain is MLPSISFDYIKRPNIVLFSNVLSLSSNI.

This is an uncharacterized protein from Saccharomyces cerevisiae (strain ATCC 204508 / S288c) (Baker's yeast).